A 166-amino-acid chain; its full sequence is Protein FAM163B (166 aa).

Residues 6-26 (VVITGGILATVILLCIIAVLC) form a helical membrane-spanning segment. Serine 40 is modified (phosphoserine).

The protein belongs to the FAM163 family.

It is found in the membrane. In Homo sapiens (Human), this protein is Protein FAM163B (FAM163B).